The following is a 310-amino-acid chain: Upstream stimulatory factor 1 (310 aa).

Residues 1–17 (MKGQQKTAETEEGTVQI) show a composition bias toward polar residues. Disordered stretches follow at residues 1 to 26 (MKGQ…ATGE) and 171 to 209 (QGGS…EVER). Over residues 190 to 209 (EAPRTTRDEKRRAQHNEVER) the composition is skewed to basic and acidic residues. The bHLH domain maps to 199–254 (KRRAQHNEVERRRRDKINNWIVQLSKIIPDCSMESTKSGQSKGGILSKACDYIQEL). Residues 271-292 (LQLDNDVLRQQVEDLKNKNLLL) form a leucine-zipper region. Residue Lys306 forms a Glycyl lysine isopeptide (Lys-Gly) (interchain with G-Cter in SUMO2) linkage.

As to quaternary structure, efficient DNA binding requires dimerization with another bHLH protein. Binds DNA as a homodimer or a heterodimer (USF1/USF2).

Its subcellular location is the nucleus. In terms of biological role, transcription factor that binds to a symmetrical DNA sequence (E-boxes) (5'-CACGTG-3') that is found in a variety of viral and cellular promoters. The protein is Upstream stimulatory factor 1 (Usf1) of Mus musculus (Mouse).